Reading from the N-terminus, the 410-residue chain is Exodeoxyribonuclease 7 large subunit (410 aa).

Belongs to the XseA family. As to quaternary structure, heterooligomer composed of large and small subunits.

It localises to the cytoplasm. The enzyme catalyses Exonucleolytic cleavage in either 5'- to 3'- or 3'- to 5'-direction to yield nucleoside 5'-phosphates.. Bidirectionally degrades single-stranded DNA into large acid-insoluble oligonucleotides, which are then degraded further into small acid-soluble oligonucleotides. This is Exodeoxyribonuclease 7 large subunit from Alkaliphilus metalliredigens (strain QYMF).